We begin with the raw amino-acid sequence, 118 residues long: uncharacterized protein (118 aa).

Helical transmembrane passes span 20-39 (VEGP…LLWI), 46-63 (LVVV…GEAV), and 67-85 (LSLV…AMSG). The segment at 85–118 (GDKSKKKGKKQRSILKDADDWDDDSWDDEGDWDE) is disordered. A compositionally biased stretch (basic residues) spans 88–97 (SKKKGKKQRS). A compositionally biased stretch (acidic residues) spans 103–118 (DDWDDDSWDDEGDWDE).

It localises to the cell membrane. This is an uncharacterized protein from Archaeoglobus fulgidus (strain ATCC 49558 / DSM 4304 / JCM 9628 / NBRC 100126 / VC-16).